The primary structure comprises 186 residues: Biphenyl dioxygenase subunit beta (186 aa).

It belongs to the bacterial ring-hydroxylating dioxygenase beta subunit family. In terms of assembly, heterohexamer consisting of 3 BphA subunits and 3 BphE subunits. A ferredoxin (BphF) and a ferredoxin reductase (BphG) must be present to obtain activity.

The enzyme catalyses biphenyl + NADH + O2 + H(+) = (2R,3S)-3-phenylcyclohexa-3,5-diene-1,2-diol + NAD(+). It participates in xenobiotic degradation; biphenyl degradation; 2-hydroxy-2,4-pentadienoate and benzoate from biphenyl: step 1/4. The beta subunit may be responsible for the substrate specificity of the enzyme. This chain is Biphenyl dioxygenase subunit beta (bphE), found in Comamonas testosteroni (Pseudomonas testosteroni).